A 131-amino-acid polypeptide reads, in one-letter code: Small ribosomal subunit protein uS8 (131 aa).

The protein belongs to the universal ribosomal protein uS8 family. Part of the 30S ribosomal subunit. Contacts proteins S5 and S12.

Its function is as follows. One of the primary rRNA binding proteins, it binds directly to 16S rRNA central domain where it helps coordinate assembly of the platform of the 30S subunit. The polypeptide is Small ribosomal subunit protein uS8 (Chlorobium limicola (strain DSM 245 / NBRC 103803 / 6330)).